The following is a 254-amino-acid chain: Alcohol dehydrogenase (254 aa).

Position 10–33 (10–33 (FVAGLGGIGLDTSRELVKRNLKNL)) interacts with NAD(+). A substrate-binding site is contributed by Ser-138. The Proton acceptor role is filled by Tyr-151.

It belongs to the short-chain dehydrogenases/reductases (SDR) family. Homodimer.

It carries out the reaction a primary alcohol + NAD(+) = an aldehyde + NADH + H(+). The catalysed reaction is a secondary alcohol + NAD(+) = a ketone + NADH + H(+). This chain is Alcohol dehydrogenase (Adh), found in Drosophila pseudoobscura pseudoobscura (Fruit fly).